A 465-amino-acid polypeptide reads, in one-letter code: Cytochrome P450 85A1 (465 aa).

Residues 2–22 (GAMMVMMGLLLIIVSLCSALL) traverse the membrane as a helical segment. A heme-binding site is contributed by Cys415.

This sequence belongs to the cytochrome P450 family. It depends on heme as a cofactor. In terms of tissue distribution, mainly expressed in apical shoots, hypocotyls, siliques and roots. Also present in the female gametophyte.

It localises to the membrane. It carries out the reaction 6-deoxoteasterone + reduced [NADPH--hemoprotein reductase] + O2 = 6alpha-hydroxyteasterone + oxidized [NADPH--hemoprotein reductase] + H2O + H(+). The catalysed reaction is 6alpha-hydroxytyphasterol + reduced [NADPH--hemoprotein reductase] + O2 = teasterone + oxidized [NADPH--hemoprotein reductase] + 2 H2O + H(+). The enzyme catalyses 3-dehydro-6-deoxoteasterone + reduced [NADPH--hemoprotein reductase] + O2 = 3-dehydro-6alpha-hydroxyteasterone + oxidized [NADPH--hemoprotein reductase] + H2O + H(+). It catalyses the reaction 3-dehydro-6alpha-hydroxyteasterone + reduced [NADPH--hemoprotein reductase] + O2 = 3-dehydroteasterone + oxidized [NADPH--hemoprotein reductase] + 2 H2O + H(+). It carries out the reaction 6-deoxotyphasterol + reduced [NADPH--hemoprotein reductase] + O2 = 6alpha-hydroxytyphasterol + oxidized [NADPH--hemoprotein reductase] + H2O + H(+). The catalysed reaction is 6alpha-hydroxytyphasterol + reduced [NADPH--hemoprotein reductase] + O2 = typhasterol + oxidized [NADPH--hemoprotein reductase] + 2 H2O + H(+). The enzyme catalyses 6-deoxocastasterone + reduced [NADPH--hemoprotein reductase] + O2 = 6alpha-hydroxycastasterone + oxidized [NADPH--hemoprotein reductase] + H2O + H(+). It catalyses the reaction 6alpha-hydroxycastasterone + reduced [NADPH--hemoprotein reductase] + O2 = castasterone + oxidized [NADPH--hemoprotein reductase] + 2 H2O + H(+). It carries out the reaction 6-deoxocastasterone + 2 reduced [NADPH--hemoprotein reductase] + 2 O2 = castasterone + 2 oxidized [NADPH--hemoprotein reductase] + 3 H2O + 2 H(+). The catalysed reaction is 6-deoxoteasterone + 2 reduced [NADPH--hemoprotein reductase] + 2 O2 = teasterone + 2 oxidized [NADPH--hemoprotein reductase] + 3 H2O + 2 H(+). The enzyme catalyses 6-deoxotyphasterol + 2 reduced [NADPH--hemoprotein reductase] + 2 O2 = typhasterol + 2 oxidized [NADPH--hemoprotein reductase] + 3 H2O + 2 H(+). It catalyses the reaction 3-dehydro-6-deoxoteasterone + 2 reduced [NADPH--hemoprotein reductase] + 2 O2 = 3-dehydroteasterone + 2 oxidized [NADPH--hemoprotein reductase] + 3 H2O + 2 H(+). Its pathway is plant hormone biosynthesis; brassinosteroid biosynthesis. Its function is as follows. Catalyzes the C6-oxidation step in brassinosteroids biosynthesis. Converts 6-deoxocastasterone (6-deoxoCS) to castasterone (CS). May also convert 6-deoxoteasterone (6-deoxoTE) to teasterone (TE), 3-dehydro-6-deoxoteasterone (6-deoxo3DT, 6-deoxo-3-DHT) to 3-dehydroteasterone (3DT, 3-DHT), and 6-deoxotyphasterol (6-deoxoTY) to typhasterol (TY). Required for the initiation of female gametogenesis (megagametogenesis). The sequence is that of Cytochrome P450 85A1 from Arabidopsis thaliana (Mouse-ear cress).